The sequence spans 186 residues: MTKGRRFNPPSDKDGRWFPHIGLTQKTPESITSATSKEPQSPHLPRQAEGKLPPIYKVREKQAVNNQFPFSVHDNRHSLENSGCYLDSGLGRKKISPDKRQHVSRNFNLWACDYVPSCLDGFSNNQISYVYKEAMVVSSFRRFPRCYKEIWNAFTFLPERSYTEVLKKKPKVRFTVDKKVVSSLES.

Residues methionine 1–leucine 52 form a disordered region. Polar residues predominate over residues threonine 24–proline 39.

This is Testis-expressed protein 36 (TEX36) from Homo sapiens (Human).